A 118-amino-acid chain; its full sequence is Deoxynogalonate monooxygenase (118 aa).

The region spanning 14–100 is the ABM domain; sequence VTFVNRFTVH…ALSTSEHGLF (87 aa).

Homodimer.

The enzyme catalyses deoxynogalonate + O2 = nogalonate + H2O + H(+). Its pathway is antibiotic biosynthesis. Functionally, involved in the biosynthesis of the anthracycline (aromatic polyketide) antibiotic nogalamycin. Catalyzes the oxygenation of 12-deoxy-nogalonic acid at position 12 to yield nogalonic acid. This Streptomyces nogalater protein is Deoxynogalonate monooxygenase.